We begin with the raw amino-acid sequence, 179 residues long: ATP-dependent protease subunit HslV (179 aa).

Threonine 6 is an active-site residue. Na(+) is bound by residues serine 162, cysteine 165, and threonine 168.

It belongs to the peptidase T1B family. HslV subfamily. In terms of assembly, a double ring-shaped homohexamer of HslV is capped on each side by a ring-shaped HslU homohexamer. The assembly of the HslU/HslV complex is dependent on binding of ATP.

It is found in the cytoplasm. It carries out the reaction ATP-dependent cleavage of peptide bonds with broad specificity.. Allosterically activated by HslU binding. Protease subunit of a proteasome-like degradation complex believed to be a general protein degrading machinery. This chain is ATP-dependent protease subunit HslV, found in Maridesulfovibrio salexigens (strain ATCC 14822 / DSM 2638 / NCIMB 8403 / VKM B-1763) (Desulfovibrio salexigens).